The primary structure comprises 334 residues: Glycerol-3-phosphate dehydrogenase [NAD(P)+] (334 aa).

W13, R33, and K106 together coordinate NADPH. Sn-glycerol 3-phosphate is bound by residues K106, G137, and S139. NADPH is bound at residue A141. Residues K192, D245, S255, R256, and N257 each coordinate sn-glycerol 3-phosphate. The active-site Proton acceptor is K192. Residue R256 participates in NADPH binding. The NADPH site is built by V280 and E282.

The protein belongs to the NAD-dependent glycerol-3-phosphate dehydrogenase family.

Its subcellular location is the cytoplasm. It carries out the reaction sn-glycerol 3-phosphate + NAD(+) = dihydroxyacetone phosphate + NADH + H(+). The enzyme catalyses sn-glycerol 3-phosphate + NADP(+) = dihydroxyacetone phosphate + NADPH + H(+). Its pathway is membrane lipid metabolism; glycerophospholipid metabolism. Catalyzes the reduction of the glycolytic intermediate dihydroxyacetone phosphate (DHAP) to sn-glycerol 3-phosphate (G3P), the key precursor for phospholipid synthesis. The sequence is that of Glycerol-3-phosphate dehydrogenase [NAD(P)+] from Chlamydia trachomatis serovar A (strain ATCC VR-571B / DSM 19440 / HAR-13).